Reading from the N-terminus, the 84-residue chain is Cell division topological specificity factor (84 aa).

It belongs to the MinE family.

In terms of biological role, prevents the cell division inhibition by proteins MinC and MinD at internal division sites while permitting inhibition at polar sites. This ensures cell division at the proper site by restricting the formation of a division septum at the midpoint of the long axis of the cell. The protein is Cell division topological specificity factor of Paraburkholderia phytofirmans (strain DSM 17436 / LMG 22146 / PsJN) (Burkholderia phytofirmans).